The following is a 209-amino-acid chain: Thymidine kinase (209 aa).

ATP-binding positions include Gly-25 to Thr-32 and Asp-103 to Gln-106. Glu-104 functions as the Proton acceptor in the catalytic mechanism. Positions 160, 163, 198, and 201 each coordinate Zn(2+).

Belongs to the thymidine kinase family. In terms of assembly, homotetramer.

It localises to the cytoplasm. It carries out the reaction thymidine + ATP = dTMP + ADP + H(+). The polypeptide is Thymidine kinase (Mycoplasma capricolum subsp. capricolum (strain California kid / ATCC 27343 / NCTC 10154)).